A 443-amino-acid chain; its full sequence is Phosphoglucosamine mutase (443 aa).

The active-site Phosphoserine intermediate is S100. Residues S100, D240, D242, and D244 each contribute to the Mg(2+) site. S100 is subject to Phosphoserine.

The protein belongs to the phosphohexose mutase family. The cofactor is Mg(2+). In terms of processing, activated by phosphorylation.

The catalysed reaction is alpha-D-glucosamine 1-phosphate = D-glucosamine 6-phosphate. Functionally, catalyzes the conversion of glucosamine-6-phosphate to glucosamine-1-phosphate. This chain is Phosphoglucosamine mutase, found in Carboxydothermus hydrogenoformans (strain ATCC BAA-161 / DSM 6008 / Z-2901).